We begin with the raw amino-acid sequence, 482 residues long: uncharacterized protein (482 aa).

12 helical membrane-spanning segments follow: residues 40–57 (LDWY…LSFL), 83–103 (AAVS…VLLV), 109–129 (HYYL…TCFV), 140–160 (LLLG…ISMT), 170–190 (LAYL…IATG), 205–225 (WLYI…LFCL), 278–298 (VIQF…PSIL), 311–331 (YMSV…CLLS), 338–358 (GWFI…LLAT), 366–386 (VATY…ITWI), 399–418 (ALGC…GQVY), and 428–448 (GFAL…RFYL).

This sequence belongs to the major facilitator superfamily. Allantoate permease family.

It localises to the endoplasmic reticulum. It is found in the membrane. This is an uncharacterized protein from Schizosaccharomyces pombe (strain 972 / ATCC 24843) (Fission yeast).